Consider the following 283-residue polypeptide: Thymidylate synthase (283 aa).

Residue R22 coordinates dUMP. Residue C160 is the Nucleophile of the active site. Residues 180–183 (RSCD), N191, and 221–223 (HIY) contribute to the dUMP site. Residue D183 participates in (6R)-5,10-methylene-5,6,7,8-tetrahydrofolate binding. A (6R)-5,10-methylene-5,6,7,8-tetrahydrofolate-binding site is contributed by S282.

This sequence belongs to the thymidylate synthase family. Bacterial-type ThyA subfamily. Homodimer.

Its subcellular location is the cytoplasm. The catalysed reaction is dUMP + (6R)-5,10-methylene-5,6,7,8-tetrahydrofolate = 7,8-dihydrofolate + dTMP. Its pathway is pyrimidine metabolism; dTTP biosynthesis. Its function is as follows. Catalyzes the reductive methylation of 2'-deoxyuridine-5'-monophosphate (dUMP) to 2'-deoxythymidine-5'-monophosphate (dTMP) while utilizing 5,10-methylenetetrahydrofolate (mTHF) as the methyl donor and reductant in the reaction, yielding dihydrofolate (DHF) as a by-product. This enzymatic reaction provides an intracellular de novo source of dTMP, an essential precursor for DNA biosynthesis. This is Thymidylate synthase from Haemophilus influenzae (strain 86-028NP).